Reading from the N-terminus, the 309-residue chain is Malate dehydrogenase (309 aa).

NAD(+) contacts are provided by residues 9-14 (GAGFVG) and aspartate 33. Positions 82 and 88 each coordinate substrate. Residues asparagine 95 and 118 to 120 (VNN) each bind NAD(+). 2 residues coordinate substrate: asparagine 120 and arginine 151. Catalysis depends on histidine 175, which acts as the Proton acceptor.

The protein belongs to the LDH/MDH superfamily. MDH type 3 family.

It catalyses the reaction (S)-malate + NAD(+) = oxaloacetate + NADH + H(+). Functionally, catalyzes the reversible oxidation of malate to oxaloacetate. The polypeptide is Malate dehydrogenase (Chloroflexus aurantiacus (strain ATCC 29364 / DSM 637 / Y-400-fl)).